A 122-amino-acid chain; its full sequence is Large ribosomal subunit protein uL14 (122 aa).

This sequence belongs to the universal ribosomal protein uL14 family. As to quaternary structure, part of the 50S ribosomal subunit. Forms a cluster with proteins L3 and L19. In the 70S ribosome, L14 and L19 interact and together make contacts with the 16S rRNA in bridges B5 and B8.

In terms of biological role, binds to 23S rRNA. Forms part of two intersubunit bridges in the 70S ribosome. This is Large ribosomal subunit protein uL14 from Mycoplasma capricolum subsp. capricolum (strain California kid / ATCC 27343 / NCTC 10154).